A 1167-amino-acid chain; its full sequence is METDNLLKYLISQNTEQRIEQIENWQTLMQQSGYTSDYLTATAGTLRTKREIQHCKDVLSDISMKRWNTSLTQGRYSSDQLFFGLNECSGTNKALVDRMKINFNFHKLNFHGFAKYWILNGDFDKMCCYDSDRTKLFLTKKGNHITIDLNGITSSCNITNVFGHLTVDDKFEPNFDILIRIVQKDEYVVCQFINFTFNPKIKFFKQQPFTIEFIGNTLYFCVNSQLIFDVLDGYKGKDDLSLRDYYLCRIAYVNLLKLEHALEQKQKLDLGDENENLAKYVHQLALNALTGVSKLSEETIRTKTLSMELGYKKNIDIGIASQKILINQFTHDLFNNKFVTDFIGWNYTYGECDIEIAPIVCNLLTYLDNESSLLNSGPLSYTLLDEFGGHDRMFILQVKDESGNDYRMLCELQFSLKYKKFSYQGLKVFNADNLEYADCYLFGFGQNQVYGEKQTLNVNSIVSDKQGNLVYHVHALSSLVCRFKVISERIEYLGNALPTFNATLTFNKDLIKMSGNLRLVEDFDGSKKTKYLLSDEFTLENTILVSINFNICEGKQTNSAARYNGKTWPGLRSRDFKNDFYENDFEVVIHNLNYHSQFNEHSNRSDILYSACNCYHFVESDSCFTNRDESYLYWKVNSQTIPMEFDSRPYIKLYNRAFIQIPVLMKGGSNRIIGPKHKCLLNEDYYVNDYQYEITSDSPRVYLPYPNSSQIISIVDSAGKQLSNTLKIESFDVSKFNVLMLPDRFNNSLDVVGELITFKNELELMLRTNNVLYSMLHSLENRIINLERFCEHLNKTYEDKFNKASSIVQFLGDVFIFIGEMSLVQFPVLGIGLIFVGTLLDGMSRILKEDYFDGISEILISSLLLFLGERKMKYSFLEKLGFGKIKTESNLVLNEKVSSVGKRRSYSAYYASDDHKEFDSSLTLRDRLLRQIRSQNPVVFDFHHNSGVMIELKNKQKPSYQALNSSYTRIKRAIGSVGTNNGLERKLNDITSENHYLKSLLITTFDYFTYQVTNSIVIVFKVVFEVKIDGDDRSVEIINKDILYYRNDLEVAFSVFNSCRYDELTDKFPLKFKFEYSDFVNYMYVVCFLSKFGSKDNLLLESYDKFYDSLYLYSSNSDVFSSSINSNNMNRLIYKISHMSAFRTLEQDQDFLTILIRVKDNSSFLRL.

The protein is Putative structural protein VP3 (S3) of Fiji disease virus (isolate Sugarcane) (FDV).